We begin with the raw amino-acid sequence, 491 residues long: Cobyric acid synthase (491 aa).

A GATase cobBQ-type domain is found at 250–439 (ELNIIVIRLP…LHGIFDNGSW (190 aa)). Catalysis depends on Cys331, which acts as the Nucleophile. His431 is a catalytic residue.

The protein belongs to the CobB/CobQ family. CobQ subfamily.

It functions in the pathway cofactor biosynthesis; adenosylcobalamin biosynthesis. In terms of biological role, catalyzes amidations at positions B, D, E, and G on adenosylcobyrinic A,C-diamide. NH(2) groups are provided by glutamine, and one molecule of ATP is hydrogenolyzed for each amidation. The chain is Cobyric acid synthase from Microcystis aeruginosa (strain NIES-843 / IAM M-2473).